The sequence spans 267 residues: 3-methyl-2-oxobutanoate hydroxymethyltransferase (267 aa).

Positions 45 and 84 each coordinate Mg(2+). 3-methyl-2-oxobutanoate-binding positions include 45–46, D84, and K113; that span reads DS. Residue E115 coordinates Mg(2+). Catalysis depends on E182, which acts as the Proton acceptor.

This sequence belongs to the PanB family. Homodecamer; pentamer of dimers. The cofactor is Mg(2+).

The protein resides in the cytoplasm. It carries out the reaction 3-methyl-2-oxobutanoate + (6R)-5,10-methylene-5,6,7,8-tetrahydrofolate + H2O = 2-dehydropantoate + (6S)-5,6,7,8-tetrahydrofolate. The protein operates within cofactor biosynthesis; coenzyme A biosynthesis. Its function is as follows. Catalyzes the reversible reaction in which hydroxymethyl group from 5,10-methylenetetrahydrofolate is transferred onto alpha-ketoisovalerate to form ketopantoate. This chain is 3-methyl-2-oxobutanoate hydroxymethyltransferase, found in Sulfurisphaera tokodaii (strain DSM 16993 / JCM 10545 / NBRC 100140 / 7) (Sulfolobus tokodaii).